Consider the following 229-residue polypeptide: Peptidyl-tRNA hydrolase (229 aa).

Tyr-17 contributes to the tRNA binding site. His-22 serves as the catalytic Proton acceptor. Phe-74, Asn-76, and Asn-122 together coordinate tRNA. Residues 194-229 are disordered; sequence AGKTTRPRKPVRQTANAEASNNSPEASATPQNKDNT. The span at 207–223 shows a compositional bias: low complexity; that stretch reads TANAEASNNSPEASATP.

Belongs to the PTH family. As to quaternary structure, monomer.

The protein localises to the cytoplasm. The enzyme catalyses an N-acyl-L-alpha-aminoacyl-tRNA + H2O = an N-acyl-L-amino acid + a tRNA + H(+). Hydrolyzes ribosome-free peptidyl-tRNAs (with 1 or more amino acids incorporated), which drop off the ribosome during protein synthesis, or as a result of ribosome stalling. Its function is as follows. Catalyzes the release of premature peptidyl moieties from peptidyl-tRNA molecules trapped in stalled 50S ribosomal subunits, and thus maintains levels of free tRNAs and 50S ribosomes. The sequence is that of Peptidyl-tRNA hydrolase from Desulfovibrio desulfuricans (strain ATCC 27774 / DSM 6949 / MB).